The primary structure comprises 949 residues: Glycine dehydrogenase (decarboxylating) (949 aa).

N6-(pyridoxal phosphate)lysine is present on lysine 704.

Belongs to the GcvP family. In terms of assembly, the glycine cleavage system is composed of four proteins: P, T, L and H. It depends on pyridoxal 5'-phosphate as a cofactor.

The enzyme catalyses N(6)-[(R)-lipoyl]-L-lysyl-[glycine-cleavage complex H protein] + glycine + H(+) = N(6)-[(R)-S(8)-aminomethyldihydrolipoyl]-L-lysyl-[glycine-cleavage complex H protein] + CO2. In terms of biological role, the glycine cleavage system catalyzes the degradation of glycine. The P protein binds the alpha-amino group of glycine through its pyridoxal phosphate cofactor; CO(2) is released and the remaining methylamine moiety is then transferred to the lipoamide cofactor of the H protein. The protein is Glycine dehydrogenase (decarboxylating) of Bacteroides thetaiotaomicron (strain ATCC 29148 / DSM 2079 / JCM 5827 / CCUG 10774 / NCTC 10582 / VPI-5482 / E50).